The chain runs to 148 residues: IQ domain-containing protein F5 (148 aa).

IQ domains lie at 11-40 (ETSA…SAWI) and 67-96 (KTWA…AVRI).

This chain is IQ domain-containing protein F5 (Iqcf5), found in Mus musculus (Mouse).